A 156-amino-acid polypeptide reads, in one-letter code: ATP synthase subunit b (156 aa).

A helical transmembrane segment spans residues 7–29 (LLGQAISFLLFVWFCMKFVWPPL).

Belongs to the ATPase B chain family. In terms of assembly, F-type ATPases have 2 components, F(1) - the catalytic core - and F(0) - the membrane proton channel. F(1) has five subunits: alpha(3), beta(3), gamma(1), delta(1), epsilon(1). F(0) has three main subunits: a(1), b(2) and c(10-14). The alpha and beta chains form an alternating ring which encloses part of the gamma chain. F(1) is attached to F(0) by a central stalk formed by the gamma and epsilon chains, while a peripheral stalk is formed by the delta and b chains.

It is found in the cell inner membrane. F(1)F(0) ATP synthase produces ATP from ADP in the presence of a proton or sodium gradient. F-type ATPases consist of two structural domains, F(1) containing the extramembraneous catalytic core and F(0) containing the membrane proton channel, linked together by a central stalk and a peripheral stalk. During catalysis, ATP synthesis in the catalytic domain of F(1) is coupled via a rotary mechanism of the central stalk subunits to proton translocation. Functionally, component of the F(0) channel, it forms part of the peripheral stalk, linking F(1) to F(0). This is ATP synthase subunit b from Shewanella halifaxensis (strain HAW-EB4).